The primary structure comprises 135 residues: Germinal center-associated signaling and motility-like protein (135 aa).

Residues 1–68 (MGNYLLRKLS…ENGSGSEEVC (68 aa)) form a disordered region. The segment covering 22–48 (GNPDEERKRQEMTTFERKLQDQDKKSQ) has biased composition (basic and acidic residues). The stretch at 26–50 (EERKRQEMTTFERKLQDQDKKSQEV) forms a coiled coil. Positions 51–66 (SSTSNQENENGSGSEE) are enriched in low complexity.

This chain is Germinal center-associated signaling and motility-like protein (GCSAML), found in Homo sapiens (Human).